The chain runs to 868 residues: V-set and immunoglobulin domain-containing protein 10-like (868 aa).

Residues 1–27 (MGLSWALLPFLLLAFRAELLALQPALG) form the signal peptide. The segment covering 26 to 52 (LGSQPPSASSSHSMGSSRDFVSNVSSS) has biased composition (low complexity). The interval 26–82 (LGSQPPSASSSHSMGSSRDFVSNVSSSQHPQPPGSEASAGIPDSNRFPQGLNSSHVP) is disordered. Residues 28-763 (SQPPSASSSH…QAGSDLSPGA (736 aa)) lie on the Extracellular side of the membrane. Residues Asn-48, Asn-77, and Asn-88 are each glycosylated (N-linked (GlcNAc...) asparagine). Residues 71–80 (RFPQGLNSSH) are compositionally biased toward polar residues. 2 disordered regions span residues 96–154 (LSPD…SGSK) and 323–342 (WSRD…EPPR). Composition is skewed to polar residues over residues 99–108 (DVTSSETPPS) and 133–143 (PASQISVQTPD). Ig-like C2-type domains lie at 289–381 (PQLS…ADVS) and 389–474 (PVIR…SVFN). The cysteines at positions 311 and 365 are disulfide-linked. Asn-410 is a glycosylation site (N-linked (GlcNAc...) asparagine). Cys-415 and Cys-458 form a disulfide bridge. N-linked (GlcNAc...) asparagine glycans are attached at residues Asn-474, Asn-628, and Asn-637. A helical transmembrane segment spans residues 764–784 (IAGIVLGSLLGLALLAGLLIL). Residues 785–868 (CICCLRRYPG…PWTVRAATQV (84 aa)) are Cytoplasmic-facing.

The protein localises to the membrane. This is V-set and immunoglobulin domain-containing protein 10-like (Vsig10l) from Mus musculus (Mouse).